Reading from the N-terminus, the 430-residue chain is 3-phosphoshikimate 1-carboxyvinyltransferase (430 aa).

Residues Lys33, Ser34, and Arg38 each contribute to the 3-phosphoshikimate site. Lys33 contributes to the phosphoenolpyruvate binding site. Phosphoenolpyruvate is bound by residues Gly101 and Arg129. 6 residues coordinate 3-phosphoshikimate: Ser172, Ser173, Gln174, Ser201, Glu319, and His346. Gln174 is a phosphoenolpyruvate binding site. Glu319 serves as the catalytic Proton acceptor. Residues Arg350, Arg391, and Lys416 each coordinate phosphoenolpyruvate.

Belongs to the EPSP synthase family. Monomer.

It is found in the cytoplasm. It catalyses the reaction 3-phosphoshikimate + phosphoenolpyruvate = 5-O-(1-carboxyvinyl)-3-phosphoshikimate + phosphate. It functions in the pathway metabolic intermediate biosynthesis; chorismate biosynthesis; chorismate from D-erythrose 4-phosphate and phosphoenolpyruvate: step 6/7. In terms of biological role, catalyzes the transfer of the enolpyruvyl moiety of phosphoenolpyruvate (PEP) to the 5-hydroxyl of shikimate-3-phosphate (S3P) to produce enolpyruvyl shikimate-3-phosphate and inorganic phosphate. The polypeptide is 3-phosphoshikimate 1-carboxyvinyltransferase (Corynebacterium glutamicum (strain ATCC 13032 / DSM 20300 / JCM 1318 / BCRC 11384 / CCUG 27702 / LMG 3730 / NBRC 12168 / NCIMB 10025 / NRRL B-2784 / 534)).